The sequence spans 467 residues: MMKFMTEDFLLSTSTAQKLYHDYAEEQPIFDYHCHLNPKEIAENRQFNDLAEIWLEGDHYKWRAMRSAGVEEHLITGSADKYSKYLAFANTVPKCIGNPIYHWTHLELRRPFGITDTIFSPETAEKIWHKGKELLQQPEFSARGIMKKMNVNLVGTTDDPIDSLEYHKAIAEDNTFDVEVVPSFRPDRAFKIELPLFNDYIEQLGKVADIEINTFDKLKQALSKRIEHFDKYGCKSADHGMEIVRFSPIPDEKTLDQILQKRLNNQPIEEEEIAQFSTALLVWLGTEYHKHHWVMQLHIGAIRNNNTRMFKLLGADAGFDSIGDRAFAESLSRLLDSMDQTDQLPKTILYCLNPRDNEMLGTMIGNFQTGGIAGKIQFGSGWWFNDQKDGMERQLQQLSQLGLLSQFVGMLTDSRSFLSYTRHEYFRRILCEMIGGWVERGEAPNDLNLLGKMVKDICYDNAKRYFK.

The protein belongs to the metallo-dependent hydrolases superfamily. Uronate isomerase family.

The enzyme catalyses D-glucuronate = D-fructuronate. It catalyses the reaction aldehydo-D-galacturonate = keto-D-tagaturonate. It functions in the pathway carbohydrate metabolism; pentose and glucuronate interconversion. The protein is Uronate isomerase of Histophilus somni (strain 2336) (Haemophilus somnus).